Consider the following 318-residue polypeptide: Olfactory receptor 13C5 (318 aa).

Residues 1-25 (MEWENHTILVEFFLKGLSGHPRLEL) lie on the Extracellular side of the membrane. The N-linked (GlcNAc...) asparagine glycan is linked to Asn5. The chain crosses the membrane as a helical span at residues 26 to 46 (LFFVLIFIMYVVILLGNGTLI). The Cytoplasmic segment spans residues 47–54 (LISILDPH). Residues 55–75 (LHTPMYFFLGNLSFLDICYTT) traverse the membrane as a helical segment. At 76–99 (TSIPSTLVSFLSERKTISLSGCAV) the chain is on the extracellular side. Cysteines 97 and 189 form a disulfide. A helical transmembrane segment spans residues 100-120 (QMFLSLAMGTTECVLLGVMAF). Residues 121 to 139 (DRYVAICNPLRYPIIMSKD) lie on the Cytoplasmic side of the membrane. A helical transmembrane segment spans residues 140–160 (AYVPMAAGSWIIGAVNSAVQT). Topologically, residues 161–197 (VFVVQLPFCRNNIINHFTCEILAVMKLACADISGNEF) are extracellular. A helical transmembrane segment spans residues 198–217 (ILLVTTTLFLLTPLLLIIVS). At 218–237 (YTLIILSIFKISSSEGRSKP) the chain is on the cytoplasmic side. The helical transmembrane segment at 238–258 (SSTCSARLTVVITFCGTIFLM) threads the bilayer. The Extracellular portion of the chain corresponds to 259–277 (YMKPKSQETLNSDDLDATD). The helical transmembrane segment at 278-298 (KLIFIFYRVMTPMMNPLIYSL) threads the bilayer. Residues 299 to 318 (RNKDVKEAVKHLLRRKNFNK) lie on the Cytoplasmic side of the membrane.

The protein belongs to the G-protein coupled receptor 1 family.

Its subcellular location is the cell membrane. Odorant receptor. In Homo sapiens (Human), this protein is Olfactory receptor 13C5 (OR13C5).